The sequence spans 70 residues: Large ribosomal subunit protein bL31 (70 aa).

Residues cysteine 16, cysteine 18, cysteine 37, and cysteine 40 each coordinate Zn(2+).

The protein belongs to the bacterial ribosomal protein bL31 family. Type A subfamily. Part of the 50S ribosomal subunit. The cofactor is Zn(2+).

Its function is as follows. Binds the 23S rRNA. The polypeptide is Large ribosomal subunit protein bL31 (Haemophilus influenzae (strain PittEE)).